Consider the following 335-residue polypeptide: uncharacterized protein (335 aa).

Residues 1–21 form the signal peptide; that stretch reads MDKKARAHTVIVCLVGALSLA. Cysteine 22 carries the N-palmitoyl cysteine lipid modification. The S-diacylglycerol cysteine moiety is linked to residue cysteine 22.

It localises to the cell membrane. This is an uncharacterized protein from Treponema pallidum (strain Nichols).